Reading from the N-terminus, the 285-residue chain is Small ribosomal subunit protein uS2 (285 aa).

A disordered region spans residues 228 to 285 (RAGLSADKDAKPEAGAGEPLAEWEQELLSQAAPAAEAEAAPAAEAEAAPAAEAPATEA). Over residues 258–285 (AAPAAEAEAAPAAEAEAAPAAEAPATEA) the composition is skewed to low complexity.

It belongs to the universal ribosomal protein uS2 family.

The polypeptide is Small ribosomal subunit protein uS2 (Rhodococcus erythropolis (strain PR4 / NBRC 100887)).